We begin with the raw amino-acid sequence, 148 residues long: CDC25-like phosphatase YCH1 (148 aa).

An N-acetylmethionine modification is found at Met-1. The Rhodanese domain maps to 29–137 (LREPFQVVDV…WQSVYGDDES (109 aa)).

Belongs to the MPI phosphatase family.

The protein localises to the cytoplasm. It is found in the nucleus. Protein phosphatase. The polypeptide is CDC25-like phosphatase YCH1 (YCH1) (Saccharomyces cerevisiae (strain ATCC 204508 / S288c) (Baker's yeast)).